Here is a 313-residue protein sequence, read N- to C-terminus: Porphobilinogen deaminase (313 aa).

Position 241 is an S-(dipyrrolylmethanemethyl)cysteine (C241).

It belongs to the HMBS family. In terms of assembly, monomer. Dipyrromethane serves as cofactor.

It carries out the reaction 4 porphobilinogen + H2O = hydroxymethylbilane + 4 NH4(+). It functions in the pathway porphyrin-containing compound metabolism; protoporphyrin-IX biosynthesis; coproporphyrinogen-III from 5-aminolevulinate: step 2/4. The protein operates within porphyrin-containing compound metabolism; chlorophyll biosynthesis. Its function is as follows. Tetrapolymerization of the monopyrrole PBG into the hydroxymethylbilane pre-uroporphyrinogen in several discrete steps. In Chlorobium phaeobacteroides (strain BS1), this protein is Porphobilinogen deaminase.